The chain runs to 417 residues: Tyrosine--tRNA ligase (417 aa).

Tyr39 contacts L-tyrosine. The 'HIGH' region motif lies at 44–53; that stretch reads ATATSLHIGN. Residues Tyr176 and Gln180 each coordinate L-tyrosine. A 'KMSKS' region motif is present at residues 236 to 240; that stretch reads KMGKS. ATP is bound at residue Lys239. Residues 350–416 enclose the S4 RNA-binding domain; sequence IGILSLLVTA…GKKKHVLVRP (67 aa).

The protein belongs to the class-I aminoacyl-tRNA synthetase family. TyrS type 1 subfamily. In terms of assembly, homodimer.

The protein resides in the cytoplasm. The enzyme catalyses tRNA(Tyr) + L-tyrosine + ATP = L-tyrosyl-tRNA(Tyr) + AMP + diphosphate + H(+). Functionally, catalyzes the attachment of tyrosine to tRNA(Tyr) in a two-step reaction: tyrosine is first activated by ATP to form Tyr-AMP and then transferred to the acceptor end of tRNA(Tyr). This is Tyrosine--tRNA ligase from Mesorhizobium japonicum (strain LMG 29417 / CECT 9101 / MAFF 303099) (Mesorhizobium loti (strain MAFF 303099)).